Reading from the N-terminus, the 837-residue chain is Putative outer membrane protein assembly factor TP_0326 (837 aa).

The first 21 residues, 1 to 21, serve as a signal peptide directing secretion; it reads MLKKASAFLIASCCVMSLAWA. The Periplasmic portion of the chain corresponds to 22-433; that stretch reads QANDNWYEGK…ILNVEEQSTA (412 aa). 5 consecutive POTRA domains span residues 31-105, 106-182, 185-273, 276-354, and 357-430; these read KPIS…VKER, PSVK…IQEG, TVVS…VVEG, YRYG…VVER, and SHVE…VEEQ. The beta stranded transmembrane segment at 434–442 threads the bilayer; that stretch reads NVQFGVTFS. The Extracellular; loop L1 segment spans residues 443 to 450; it reads GVGEAGTF. The beta stranded transmembrane segment at 451–461 threads the bilayer; that stretch reads PLSLFCQWEEK. At 462–468 the chain is on the periplasmic side; it reads NFLGKGN. The beta stranded transmembrane segment at 469–476 threads the bilayer; sequence EISVNATL. At 477–478 the chain is on the extracellular; loop L2 side; sequence GS. A beta stranded transmembrane segment spans residues 479 to 489; it reads EAQSLKLGYVE. Topologically, residues 490 to 499 are periplasmic; that stretch reads RWFLGSPLTV. A beta stranded transmembrane segment spans residues 500–520; sequence GFDFELTHKNLFVYRAGSYGN. At 521-530 the chain is on the extracellular; loop L3 side; the sequence is GLPHPYTSRE. The chain crosses the membrane as a beta stranded span at residues 531–543; it reads QWASSPGLAESFR. Topologically, residues 544–554 are periplasmic; the sequence is LKYSRFESAIG. The beta stranded transmembrane segment at 555 to 568 threads the bilayer; that stretch reads AHTGYQWYPRYAVI. At 569–601 the chain is on the extracellular; loop L4 side; the sequence is RVNGGVDFRVVKNFYDKDNNQPFDLTVKEQLNW. A beta stranded transmembrane segment spans residues 602–615; the sequence is TSINSFWTSVSFDG. Residues 616–623 lie on the Periplasmic side of the membrane; the sequence is RDFAYDPS. A beta stranded membrane pass occupies residues 624 to 636; that stretch reads SGWFLGQRCTFNG. Residues 637–644 lie on the Extracellular; loop L5 side of the membrane; it reads LVPFLEKE. A beta stranded membrane pass occupies residues 645–658; that stretch reads HSFRSDTKAEFYVT. Residues 659-667 lie on the Periplasmic side of the membrane; sequence LLNYPVSAV. A beta stranded membrane pass occupies residues 668–682; that stretch reads WNLKFVLAFYTGVSV. At 683 to 724 the chain is on the extracellular; loop L6 side; it reads QTYYGRRKSENGKGNGVRSGALVIDGVLVGRGWSEDAKKNTG. Residues 725-736 traverse the membrane as a beta stranded segment; that stretch reads DLLLHHWIEFRW. The Periplasmic segment spans residues 737–741; it reads PLAHG. A beta stranded transmembrane segment spans residues 742 to 756; it reads IVSFDFFFDAAMVYN. Residues 757–786 lie on the Extracellular; loop L7 side of the membrane; the sequence is IESQSPNGSSSASSSSSSSSSSSRTTSSEG. The interval 761–785 is disordered; that stretch reads SPNGSSSASSSSSSSSSSSRTTSSE. Low complexity predominate over residues 765-784; it reads SSSASSSSSSSSSSSRTTSS. A beta stranded membrane pass occupies residues 787–799; that stretch reads LYKMSYGPGLRFT. Residues 800–802 lie on the Periplasmic side of the membrane; it reads LPQ. The chain crosses the membrane as a beta stranded span at residues 803–814; sequence FPLKLAFANTFT. Residues 815–824 lie on the Extracellular; loop L8 side of the membrane; that stretch reads SPGGIPKTKK. The chain crosses the membrane as a beta stranded span at residues 825–829; the sequence is NWNFV. The Periplasmic portion of the chain corresponds to 830 to 837; the sequence is LSFTVNNL.

Belongs to the BamA family. In terms of assembly, part of 2 complexes of about 239 and 164 kDa.

The protein resides in the cell outer membrane. Might be part of the outer membrane protein assembly complex, which is involved in assembly and insertion of beta-barrel proteins into the outer membrane. Its function is as follows. Both rabbit immune serum and rabbit antiserum specific for extracytoplasmic loop L4 promote bacteria internalization by rabbit peritoneal macrophages. Pools of human syphilitic sera from the USA and Columbia recognize both the N-terminal POTRA-containing and C-terminal beta-barrel domains as well as loop L4, showing this protein stimulates the immune system in both humans and rabbits. The sequence is that of Putative outer membrane protein assembly factor TP_0326 (tp92) from Treponema pallidum (strain Nichols).